The following is a 386-amino-acid chain: Protein RETICULATA-RELATED 4, chloroplastic (386 aa).

A chloroplast-targeting transit peptide spans 1 to 61; the sequence is MAIASCFFCV…RRVPITPVLS (61 aa). Positions 61 to 99 are disordered; sequence SASSGNGGSDNNGGGLSGGGGGGDGGKNDGDGHGDEDRD. Gly residues predominate over residues 65 to 85; sequence GNGGSDNNGGGLSGGGGGGDG. Positions 86 to 99 are enriched in basic and acidic residues; that stretch reads GKNDGDGHGDEDRD. A run of 2 helical transmembrane segments spans residues 201–221 and 273–293; these read VVFA…YLPA and KLFA…NAFI.

Belongs to the RETICULATA family.

It localises to the plastid. The protein resides in the chloroplast membrane. In terms of biological role, may play a role in leaf development. In Arabidopsis thaliana (Mouse-ear cress), this protein is Protein RETICULATA-RELATED 4, chloroplastic.